Reading from the N-terminus, the 174-residue chain is ATP synthase subunit b (174 aa).

A helical membrane pass occupies residues 15–33; the sequence is NPGLVIWTLVTFSVVVFVL.

This sequence belongs to the ATPase B chain family. In terms of assembly, F-type ATPases have 2 components, F(1) - the catalytic core - and F(0) - the membrane proton channel. F(1) has five subunits: alpha(3), beta(3), gamma(1), delta(1), epsilon(1). F(0) has three main subunits: a(1), b(2) and c(10-14). The alpha and beta chains form an alternating ring which encloses part of the gamma chain. F(1) is attached to F(0) by a central stalk formed by the gamma and epsilon chains, while a peripheral stalk is formed by the delta and b chains.

Its subcellular location is the cell inner membrane. Its function is as follows. F(1)F(0) ATP synthase produces ATP from ADP in the presence of a proton or sodium gradient. F-type ATPases consist of two structural domains, F(1) containing the extramembraneous catalytic core and F(0) containing the membrane proton channel, linked together by a central stalk and a peripheral stalk. During catalysis, ATP synthesis in the catalytic domain of F(1) is coupled via a rotary mechanism of the central stalk subunits to proton translocation. Functionally, component of the F(0) channel, it forms part of the peripheral stalk, linking F(1) to F(0). The polypeptide is ATP synthase subunit b (Leptospira biflexa serovar Patoc (strain Patoc 1 / Ames)).